The chain runs to 563 residues: Cystathionine gamma-synthase 1, chloroplastic (563 aa).

Residues 1–68 constitute a chloroplast transit peptide; it reads MAVSSFQCPT…SRILRFPPNF (68 aa). Residues Y226, R228, G256, M257, Y281, S376, and T378 each coordinate pyridoxal 5'-phosphate. K379 is modified (N6-(pyridoxal phosphate)lysine).

This sequence belongs to the trans-sulfuration enzymes family. Pyridoxal 5'-phosphate serves as cofactor.

It localises to the plastid. The protein resides in the chloroplast. It carries out the reaction O-phospho-L-homoserine + L-cysteine = L,L-cystathionine + phosphate. The enzyme catalyses O-succinyl-L-homoserine + L-cysteine = L,L-cystathionine + succinate + H(+). The protein operates within amino-acid biosynthesis; L-methionine biosynthesis via de novo pathway; L-cystathionine from O-succinyl-L-homoserine: step 1/1. Its activity is regulated as follows. Inhibited by propargylglycine. Its function is as follows. Catalyzes the first committed step of methionine (Met) biosynthesis. Catalyzes the formation of L-cystathionine from homoserine esters and L-cysteine, via a gamma-replacement reaction. Substrate preference for cystathionine synthesis is O-phospho-L-homoserine (OPH) &gt; O(4)-succinyl-L-homoserine (OSH) &gt;&gt; O-acetyl-L-homoserine (OAH). Is able, at extremely low rate, to catalyze a gamma-elimination of OPH in the absence of cysteine to produce inorganic phosphate (Pi), 2-oxobutanoate and ammonia. In Arabidopsis thaliana (Mouse-ear cress), this protein is Cystathionine gamma-synthase 1, chloroplastic.